The primary structure comprises 34 residues: MQNSSNIFTTDKAANEFSFPDLKNFRYNDRTFLR.

This is an uncharacterized protein from Haemophilus influenzae (strain ATCC 51907 / DSM 11121 / KW20 / Rd).